The chain runs to 540 residues: Dynein axonemal assembly factor 3 (540 aa).

Disordered stretches follow at residues 328 to 355 (RASR…TPES) and 485 to 522 (SSPA…VLAQ).

The protein belongs to the DNAAF3 family.

The protein resides in the cytoplasm. It is found in the dynein axonemal particle. Required for the assembly of axonemal inner and outer dynein arms. Involved in preassembly of dyneins into complexes before their transport into cilia. This chain is Dynein axonemal assembly factor 3 (DNAAF3), found in Macaca fascicularis (Crab-eating macaque).